A 678-amino-acid chain; its full sequence is Glycine--tRNA ligase beta subunit (678 aa).

Belongs to the class-II aminoacyl-tRNA synthetase family. As to quaternary structure, tetramer of two alpha and two beta subunits.

Its subcellular location is the cytoplasm. It carries out the reaction tRNA(Gly) + glycine + ATP = glycyl-tRNA(Gly) + AMP + diphosphate. The protein is Glycine--tRNA ligase beta subunit of Streptococcus pneumoniae (strain Taiwan19F-14).